The sequence spans 688 residues: Telomere length regulation protein TEL2 (688 aa).

A phosphoserine mark is found at Ser-417 and Ser-419.

This sequence belongs to the TEL2 family. Component of the TTT complex composed of TEL2, TTI1 and TTI2. Interacts with TTI1 and TTI2.

Its subcellular location is the nucleus. It is found in the chromosome. The protein localises to the telomere. Its function is as follows. Part of the TTT complex that is required to stabilize protein levels of the phosphatidylinositol 3-kinase-related protein kinase (PIKK) family proteins. Required for telomere length regulation and telomere position effect. Regulates telomere length and participates in gene silencing at subtelomeric regions. Binds to telomeric DNA repeats. The polypeptide is Telomere length regulation protein TEL2 (TEL2) (Saccharomyces cerevisiae (strain ATCC 204508 / S288c) (Baker's yeast)).